The sequence spans 370 residues: MRSGYTLPVFACAGAIAALHWLRQRQSLQVGLVDLIEPAQMAEVPIEQVAGLSENMALAITRSDPGDNIDLTKNTPIWAVVEWGQGGGEQVTIKGGEGIGKQVNADNRAAIYSYAQRLLQANLTRLLAPEESIIVTIILPEGRSLAVRTSNSAFGVVEGLSLLGTTGISQPLSSPDQLDAFRSELQHKASLYASLVFCIGENGLDLARKIGINAEKLVKTANWLGPMLVEAEALGVKEILLFGYHGKLMKLAGGIFHTHHHLADGRREVLATHCALGGLSKQDIEIVFHAPTAEAALKHLKALDSSTGSDWVNQVYSAIAETIDSRCQEYMQSHSSRGTAATICGSILFDRDRKIIVKSKTACNLMGNLC.

It belongs to the CbiD family.

The catalysed reaction is Co-precorrin-5B + S-adenosyl-L-methionine = Co-precorrin-6A + S-adenosyl-L-homocysteine. It participates in cofactor biosynthesis; adenosylcobalamin biosynthesis; cob(II)yrinate a,c-diamide from sirohydrochlorin (anaerobic route): step 6/10. Functionally, catalyzes the methylation of C-1 in cobalt-precorrin-5B to form cobalt-precorrin-6A. The sequence is that of Cobalt-precorrin-5B C(1)-methyltransferase from Trichormus variabilis (strain ATCC 29413 / PCC 7937) (Anabaena variabilis).